Reading from the N-terminus, the 156-residue chain is Cyclic pyranopterin monophosphate synthase (156 aa).

Substrate-binding positions include 73-75 (LCH) and 110-111 (ME). The active site involves Asp125.

Belongs to the MoaC family. In terms of assembly, homohexamer; trimer of dimers.

The enzyme catalyses (8S)-3',8-cyclo-7,8-dihydroguanosine 5'-triphosphate = cyclic pyranopterin phosphate + diphosphate. The protein operates within cofactor biosynthesis; molybdopterin biosynthesis. In terms of biological role, catalyzes the conversion of (8S)-3',8-cyclo-7,8-dihydroguanosine 5'-triphosphate to cyclic pyranopterin monophosphate (cPMP). The sequence is that of Cyclic pyranopterin monophosphate synthase from Stutzerimonas stutzeri (strain A1501) (Pseudomonas stutzeri).